The following is a 494-amino-acid chain: Aspartyl/glutamyl-tRNA(Asn/Gln) amidotransferase subunit B (494 aa).

It belongs to the GatB/GatE family. GatB subfamily. As to quaternary structure, heterotrimer of A, B and C subunits.

It carries out the reaction L-glutamyl-tRNA(Gln) + L-glutamine + ATP + H2O = L-glutaminyl-tRNA(Gln) + L-glutamate + ADP + phosphate + H(+). It catalyses the reaction L-aspartyl-tRNA(Asn) + L-glutamine + ATP + H2O = L-asparaginyl-tRNA(Asn) + L-glutamate + ADP + phosphate + 2 H(+). Functionally, allows the formation of correctly charged Asn-tRNA(Asn) or Gln-tRNA(Gln) through the transamidation of misacylated Asp-tRNA(Asn) or Glu-tRNA(Gln) in organisms which lack either or both of asparaginyl-tRNA or glutaminyl-tRNA synthetases. The reaction takes place in the presence of glutamine and ATP through an activated phospho-Asp-tRNA(Asn) or phospho-Glu-tRNA(Gln). This Synechococcus sp. (strain CC9902) protein is Aspartyl/glutamyl-tRNA(Asn/Gln) amidotransferase subunit B.